Here is a 176-residue protein sequence, read N- to C-terminus: RNA pyrophosphohydrolase (176 aa).

Residues 6 to 149 enclose the Nudix hydrolase domain; it reads GYRPNVGIVI…KRDVYRRVMK (144 aa). The short motif at 38–59 is the Nudix box element; sequence GGINPGESPEQAMYRELYEEVG.

The protein belongs to the Nudix hydrolase family. RppH subfamily. Requires a divalent metal cation as cofactor.

Its function is as follows. Accelerates the degradation of transcripts by removing pyrophosphate from the 5'-end of triphosphorylated RNA, leading to a more labile monophosphorylated state that can stimulate subsequent ribonuclease cleavage. The chain is RNA pyrophosphohydrolase from Photorhabdus laumondii subsp. laumondii (strain DSM 15139 / CIP 105565 / TT01) (Photorhabdus luminescens subsp. laumondii).